The primary structure comprises 227 residues: Glutathione S-transferase U7 (227 aa).

Positions 8 to 87 constitute a GST N-terminal domain; sequence EEVKLLGMWA…YIDETWRDNP (80 aa). Glutathione contacts are provided by residues 18 to 19, 44 to 45, 58 to 59, and 71 to 72; these read SP, NK, MI, and ES. The GST C-terminal domain occupies 92–215; the sequence is DPYERTMARF…PPEDEHLKYI (124 aa).

It belongs to the GST superfamily. Tau family.

The protein localises to the cytoplasm. It is found in the cytosol. It catalyses the reaction RX + glutathione = an S-substituted glutathione + a halide anion + H(+). May be involved in the conjugation of reduced glutathione to a wide number of exogenous and endogenous hydrophobic electrophiles and have a detoxification role against certain herbicides. In Arabidopsis thaliana (Mouse-ear cress), this protein is Glutathione S-transferase U7 (GSTU7).